Here is a 185-residue protein sequence, read N- to C-terminus: Ribosome-recycling factor (185 aa).

The protein belongs to the RRF family.

It is found in the cytoplasm. Responsible for the release of ribosomes from messenger RNA at the termination of protein biosynthesis. May increase the efficiency of translation by recycling ribosomes from one round of translation to another. This is Ribosome-recycling factor from Geobacillus kaustophilus (strain HTA426).